The sequence spans 524 residues: Bifunctional purine biosynthesis protein PurH (524 aa).

One can recognise an MGS-like domain in the interval 1-149 (MSDPLIKRAL…KNNESVTVLT (149 aa)).

The protein belongs to the PurH family.

The catalysed reaction is (6R)-10-formyltetrahydrofolate + 5-amino-1-(5-phospho-beta-D-ribosyl)imidazole-4-carboxamide = 5-formamido-1-(5-phospho-D-ribosyl)imidazole-4-carboxamide + (6S)-5,6,7,8-tetrahydrofolate. It catalyses the reaction IMP + H2O = 5-formamido-1-(5-phospho-D-ribosyl)imidazole-4-carboxamide. The protein operates within purine metabolism; IMP biosynthesis via de novo pathway; 5-formamido-1-(5-phospho-D-ribosyl)imidazole-4-carboxamide from 5-amino-1-(5-phospho-D-ribosyl)imidazole-4-carboxamide (10-formyl THF route): step 1/1. It functions in the pathway purine metabolism; IMP biosynthesis via de novo pathway; IMP from 5-formamido-1-(5-phospho-D-ribosyl)imidazole-4-carboxamide: step 1/1. This Chlorobium luteolum (strain DSM 273 / BCRC 81028 / 2530) (Pelodictyon luteolum) protein is Bifunctional purine biosynthesis protein PurH.